A 146-amino-acid polypeptide reads, in one-letter code: Glycosylation-dependent cell adhesion molecule 1 (146 aa).

Residues 1-19 (MKFFTVLLFASLAATSLAA) form the signal peptide. Residues 25–112 (DELHLRTQPT…SAATSEGKLT (88 aa)) form a disordered region. A compositionally biased stretch (basic and acidic residues) spans 48–60 (ISKESTSSKDLSK). Phosphoserine is present on residues serine 54, serine 59, and serine 71. Positions 74–106 (NVGTESTKPQSQEAQDGLRSGSSQQEETTSAAT) are enriched in polar residues.

This sequence belongs to the PP3/GlyCAM-1 family. Extensively O-glycosylated. As to expression, lymph nodes. Associated with the lumenal surface of the high endothelial venules of peripheral lymph nodes.

It localises to the cell membrane. Functionally, adhesion molecule that accomplishes cell binding by presenting carbohydrate(s) to the lectin domain of L-selectin. This Rattus norvegicus (Rat) protein is Glycosylation-dependent cell adhesion molecule 1 (Glycam1).